Consider the following 393-residue polypeptide: Riboflavin biosynthesis protein RibBA (393 aa).

The tract at residues 1–200 is DHBP synthase; that stretch reads MQFDNIDSAL…IDDLIEYRKK (200 aa). D-ribulose 5-phosphate is bound by residues 27 to 28, D32, 139 to 143, and E163; these read RE and RNGHT. E28 lines the Mg(2+) pocket. H142 contributes to the Mg(2+) binding site. A GTP cyclohydrolase II region spans residues 201-393; that stretch reads LEPEIEFKAK…TKKIKMGHLI (193 aa). 249–253 is a GTP binding site; it reads RLHSA. Zn(2+)-binding residues include C254, C265, and C267. Residues Q270, 291 to 293, and T313 contribute to the GTP site; that span reads EGR. D325 (proton acceptor; for GTP cyclohydrolase activity) is an active-site residue. R327 functions as the Nucleophile; for GTP cyclohydrolase activity in the catalytic mechanism. GTP-binding residues include S348 and K353.

The protein in the N-terminal section; belongs to the DHBP synthase family. This sequence in the C-terminal section; belongs to the GTP cyclohydrolase II family. Requires Mg(2+) as cofactor. Mn(2+) is required as a cofactor. Zn(2+) serves as cofactor.

The enzyme catalyses D-ribulose 5-phosphate = (2S)-2-hydroxy-3-oxobutyl phosphate + formate + H(+). It carries out the reaction GTP + 4 H2O = 2,5-diamino-6-hydroxy-4-(5-phosphoribosylamino)-pyrimidine + formate + 2 phosphate + 3 H(+). The protein operates within cofactor biosynthesis; riboflavin biosynthesis; 2-hydroxy-3-oxobutyl phosphate from D-ribulose 5-phosphate: step 1/1. Its pathway is cofactor biosynthesis; riboflavin biosynthesis; 5-amino-6-(D-ribitylamino)uracil from GTP: step 1/4. Catalyzes the conversion of D-ribulose 5-phosphate to formate and 3,4-dihydroxy-2-butanone 4-phosphate. Functionally, catalyzes the conversion of GTP to 2,5-diamino-6-ribosylamino-4(3H)-pyrimidinone 5'-phosphate (DARP), formate and pyrophosphate. The polypeptide is Riboflavin biosynthesis protein RibBA (Staphylococcus aureus (strain MRSA252)).